Reading from the N-terminus, the 634-residue chain is Calcium up-regulated protein D (634 aa).

A disordered region spans residues 1 to 23 (MINIEDISKSSNQSEEKQLKSTS). Ricin B-type lectin domains lie at 27 to 146 (KPKY…WTTF) and 117 to 250 (PGNG…WGIN).

Belongs to the cup family.

It localises to the cytoplasm. Its subcellular location is the membrane. Functionally, may play an important role in stabilizing and/or regulating the cell membrane during Ca(2+) stress or certain stages of development. This chain is Calcium up-regulated protein D (cupD), found in Dictyostelium discoideum (Social amoeba).